Here is a 308-residue protein sequence, read N- to C-terminus: 34.2 kDa protein in rubredoxin operon (308 aa).

Cysteines 136 and 139 form a disulfide. 268-278 (TNIKGVFAAGD) lines the FAD pocket.

This sequence belongs to the class-II pyridine nucleotide-disulfide oxidoreductase family.

This chain is 34.2 kDa protein in rubredoxin operon, found in Clostridium pasteurianum.